A 1328-amino-acid polypeptide reads, in one-letter code: WASH complex subunit 2 (1328 aa).

A sufficient for interaction with WASHC3, WASHC4 and WASHC5; required for interaction with WASHC1 region spans residues 1-219 (MNRTSPDSEQ…VGSDRGSIVD (219 aa)). 5 positions are modified to phosphoserine: serine 157, serine 159, serine 204, serine 205, and serine 209. Positions 201-213 (GELSSEEGSVGSD) are enriched in low complexity. 2 disordered regions span residues 201–655 (GELS…KTNL) and 675–830 (KKTQ…PKST). 2 stretches are compositionally biased toward acidic residues: residues 219-231 (DSEDEKEEEESDD) and 248-273 (SDEEEDDDADLFADSEKEGDDIEDIE). Serine 283 is modified (phosphoserine). Basic and acidic residues predominate over residues 288–323 (LAARIKGDVSNQRKEGHTDGKPQRTVKEKKERRTPA). Threonine 321 carries the post-translational modification Phosphothreonine. The tract at residues 346–592 (SRGGLFSDRQ…QTSSLPPQSQ (247 aa)) is sufficient for interaction with CCDC93. The segment at 347-1328 (RGGLFSDRQG…DDPLNAFGSQ (982 aa)) is interaction with VPS35. Positions 357–367 (LFDDDDESDLF) match the LFa 1 motif. Phosphoserine occurs at positions 384 and 387. 2 consecutive short sequence motifs (LFa) follow at residues 440-455 (LFDDDDNDSDEDDNFF) and 474-483 (IFDDDEGDLF). Positions 441–453 (FDDDDNDSDEDDN) are enriched in acidic residues. Residues 508–528 (TITLPSSKNPKLVSETKTQKG) are compositionally biased toward polar residues. 2 consecutive short sequence motifs (LFa) follow at residues 529-540 (LFSDEEDSEDLF) and 564-575 (LFGDEDEEDNLF). Serine 531 and serine 536 each carry phosphoserine. The segment covering 539–556 (LFSSQSSSKTKSASVLSS) has biased composition (low complexity). The span at 582 to 592 (KQTSSLPPQSQ) shows a compositional bias: polar residues. Serine 610 and serine 611 each carry phosphoserine. The span at 627 to 638 (ASERKSKGERWD) shows a compositional bias: basic and acidic residues. 2 short sequence motifs (LFa) span residues 655-667 (LFEEEDDDGVDLF) and 683-695 (LFEDDTDSGSSLF). Polar residues predominate over residues 690 to 699 (SGSSLFSLPP). 5 positions are modified to phosphoserine: serine 720, serine 744, serine 749, serine 780, and serine 795. A compositionally biased stretch (acidic residues) spans 797–808 (FDEDEDKVEDDS). 2 short sequence motifs (LFa) span residues 832 to 840 (VFQDEELLF) and 849 to 855 (DPDVDLF). 2 disordered regions span residues 863–940 (LSMP…EPSS) and 991–1088 (PTLP…AMAV). Phosphoserine occurs at positions 867 and 870. Residues 871–881 (LFGDDDDDDLF) carry the LFa 10 motif. Residues 894–919 (PEKKGTLRKDHKPPELTEGSKEKSTW) show a composition bias toward basic and acidic residues. An interaction with phospholipids region spans residues 925–1328 (QDSSGLTPFK…DDPLNAFGSQ (404 aa)). The segment covering 1016–1034 (NKGRVKVRGKRRPQTRAAR) has biased composition (basic residues). The required for interaction with F-actin-capping protein subunit alpha (CAPZA1 or CAPZA2 or CAPZA3) stretch occupies residues 1017–1035 (KGRVKVRGKRRPQTRAARR). 4 positions are modified to phosphoserine: serine 1042, serine 1060, serine 1077, and serine 1102. The interval 1115 to 1210 (AHLFDSGDIF…KKNQWKSDSH (96 aa)) is disordered. 3 consecutive short sequence motifs (LFa) follow at residues 1117 to 1124 (LFDSGDIF), 1157 to 1171 (VFPDLSEASGVDDLF), and 1187 to 1195 (LLEDEEDLF). Residues serine 1162 and serine 1165 each carry the phosphoserine modification. Residues 1196–1210 (ADQKGKKNQWKSDSH) show a composition bias toward basic and acidic residues. 3 short sequence motifs (LFa) span residues 1220-1226 (IFEDDIF), 1249-1257 (LFDDNIDIF), and 1277-1286 (MFDDDTDDIF). A disordered region spans residues 1289–1310 (GLQAKASKPKSQSAEAVSELRS). The short motif at 1317-1325 (IFDDPLNAF) is the LFa 17 element. A Phosphoserine modification is found at serine 1327.

Belongs to the FAM21 family. As to quaternary structure, component of the WASH core complex also described as WASH regulatory complex (SHRC) composed of WASHC1, WASHC2, WASHC3, WASHC4 and WASHC5; in the complex interacts (via N-terminus) directly with WASHC1. The WASH core complex associates with the F-actin-capping protein dimer (formed by CAPZA1, CAPZA2 or CAPZA3 and CAPZB) in a transient or substoichiometric manner which was initially described as WASH complex. Interacts with VPS35; mediates the association with the retromer CSC complex. Interacts with FKBP15. Interacts with CCDC93, CCDC22, VPS35L; indicative for an association of the WASH core complex with the CCC and retriever complexes. Directly interacts with TBC1D23.

Its subcellular location is the early endosome membrane. The protein resides in the cell membrane. Functionally, acts as a component of the WASH core complex that functions as a nucleation-promoting factor (NPF) at the surface of endosomes, where it recruits and activates the Arp2/3 complex to induce actin polymerization, playing a key role in the fission of tubules that serve as transport intermediates during endosome sorting. Mediates the recruitment of the WASH core complex to endosome membranes via binding to phospholipids and VPS35 of the retromer CSC. Mediates the recruitment of the F-actin-capping protein dimer to the WASH core complex probably promoting localized F-actin polymerization needed for vesicle scission. Via its C-terminus binds various phospholipids, most strongly phosphatidylinositol 4-phosphate (PtdIns-(4)P), phosphatidylinositol 5-phosphate (PtdIns-(5)P) and phosphatidylinositol 3,5-bisphosphate (PtdIns-(3,5)P2). Involved in the endosome-to-plasma membrane trafficking and recycling of SNX27-retromer-dependent cargo proteins, such as GLUT1. Required for the association of DNAJC13, ENTR1, ANKRD50 with retromer CSC subunit VPS35. Required for the endosomal recruitment of CCC and retriever complexes subunits COMMD1 and CCDC93 as well as the retrievere complex subunit VPS35L. This Rattus norvegicus (Rat) protein is WASH complex subunit 2.